A 497-amino-acid chain; its full sequence is Di-/tripeptide transporter (497 aa).

The Cytoplasmic segment spans residues Met-1–Arg-36. A helical transmembrane segment spans residues Ala-37–Gly-55. The Extracellular segment spans residues Leu-56 to Ile-64. A helical transmembrane segment spans residues Val-65 to Ala-83. Residues Asp-84 to Thr-92 are Cytoplasmic-facing. A helical transmembrane segment spans residues Ile-93–Phe-111. Residues Gly-112–Ser-115 lie on the Extracellular side of the membrane. The chain crosses the membrane as a helical span at residues Leu-116–Ile-134. Residues Ser-135–Asn-154 are Cytoplasmic-facing. The chain crosses the membrane as a helical span at residues Ile-155 to Thr-173. Residues Val-174–His-181 are Extracellular-facing. Residues Leu-182–Tyr-200 traverse the membrane as a helical segment. Residues Gly-201 to Asn-224 lie on the Cytoplasmic side of the membrane. A helical membrane pass occupies residues Phe-225 to Leu-243. Topologically, residues Tyr-244–Asn-254 are extracellular. The helical transmembrane segment at Phe-255–Met-273 threads the bilayer. Over Met-274–Pro-293 the chain is Cytoplasmic. A helical transmembrane segment spans residues Leu-294–Ile-312. At Ala-313–Pro-335 the chain is on the extracellular side. Residues Ser-336–Val-354 traverse the membrane as a helical segment. Over Arg-355–Gly-372 the chain is Cytoplasmic. A helical membrane pass occupies residues Leu-373–Leu-391. The Extracellular segment spans residues Asn-392 to Ser-425. Residues Thr-426–Ala-444 form a helical membrane-spanning segment. Over Asp-445–Arg-497 the chain is Cytoplasmic.

Belongs to the major facilitator superfamily. Proton-dependent oligopeptide transporter (POT/PTR) (TC 2.A.17) family.

Its subcellular location is the cell membrane. Proton-dependent uptake of di- or tri-peptides. The sequence is that of Di-/tripeptide transporter (dtpT) from Lactococcus lactis subsp. lactis (strain IL1403) (Streptococcus lactis).